Reading from the N-terminus, the 264-residue chain is Thymidylate synthase 2 (264 aa).

R21 serves as a coordination point for dUMP. A (6R)-5,10-methylene-5,6,7,8-tetrahydrofolate-binding site is contributed by H51. Residue 126-127 (RR) participates in dUMP binding. C146 (nucleophile) is an active-site residue. DUMP-binding positions include 166–169 (RSAD), N177, and 207–209 (HIY). D169 is a (6R)-5,10-methylene-5,6,7,8-tetrahydrofolate binding site. Position 263 (S263) interacts with (6R)-5,10-methylene-5,6,7,8-tetrahydrofolate.

This sequence belongs to the thymidylate synthase family. Bacterial-type ThyA subfamily. In terms of assembly, homodimer.

It localises to the cytoplasm. The catalysed reaction is dUMP + (6R)-5,10-methylene-5,6,7,8-tetrahydrofolate = 7,8-dihydrofolate + dTMP. Its pathway is pyrimidine metabolism; dTTP biosynthesis. In terms of biological role, catalyzes the reductive methylation of 2'-deoxyuridine-5'-monophosphate (dUMP) to 2'-deoxythymidine-5'-monophosphate (dTMP) while utilizing 5,10-methylenetetrahydrofolate (mTHF) as the methyl donor and reductant in the reaction, yielding dihydrofolate (DHF) as a by-product. This enzymatic reaction provides an intracellular de novo source of dTMP, an essential precursor for DNA biosynthesis. The chain is Thymidylate synthase 2 from Bacillus subtilis (strain 168).